Consider the following 338-residue polypeptide: Ferrochelatase (338 aa).

His-202 and Glu-283 together coordinate Fe cation.

It belongs to the ferrochelatase family.

The protein resides in the cytoplasm. It carries out the reaction heme b + 2 H(+) = protoporphyrin IX + Fe(2+). Its pathway is porphyrin-containing compound metabolism; protoheme biosynthesis; protoheme from protoporphyrin-IX: step 1/1. Its function is as follows. Catalyzes the ferrous insertion into protoporphyrin IX. The polypeptide is Ferrochelatase (Acinetobacter baumannii (strain ATCC 17978 / DSM 105126 / CIP 53.77 / LMG 1025 / NCDC KC755 / 5377)).